The chain runs to 370 residues: UDP-N-acetylglucosamine--N-acetylmuramyl-(pentapeptide) pyrophosphoryl-undecaprenol N-acetylglucosamine transferase (370 aa).

Residues 15 to 17 (TGG), asparagine 126, arginine 169, serine 197, and glutamine 299 each bind UDP-N-acetyl-alpha-D-glucosamine.

This sequence belongs to the glycosyltransferase 28 family. MurG subfamily.

Its subcellular location is the cell inner membrane. It carries out the reaction di-trans,octa-cis-undecaprenyl diphospho-N-acetyl-alpha-D-muramoyl-L-alanyl-D-glutamyl-meso-2,6-diaminopimeloyl-D-alanyl-D-alanine + UDP-N-acetyl-alpha-D-glucosamine = di-trans,octa-cis-undecaprenyl diphospho-[N-acetyl-alpha-D-glucosaminyl-(1-&gt;4)]-N-acetyl-alpha-D-muramoyl-L-alanyl-D-glutamyl-meso-2,6-diaminopimeloyl-D-alanyl-D-alanine + UDP + H(+). The protein operates within cell wall biogenesis; peptidoglycan biosynthesis. Cell wall formation. Catalyzes the transfer of a GlcNAc subunit on undecaprenyl-pyrophosphoryl-MurNAc-pentapeptide (lipid intermediate I) to form undecaprenyl-pyrophosphoryl-MurNAc-(pentapeptide)GlcNAc (lipid intermediate II). This Methylorubrum populi (strain ATCC BAA-705 / NCIMB 13946 / BJ001) (Methylobacterium populi) protein is UDP-N-acetylglucosamine--N-acetylmuramyl-(pentapeptide) pyrophosphoryl-undecaprenol N-acetylglucosamine transferase.